We begin with the raw amino-acid sequence, 107 residues long: U1-lycotoxin-Ls1h (107 aa).

A signal peptide spans M1 to S20. Positions E21–R41 are excised as a propeptide. 3 disulfides stabilise this stretch: C44–C59, C51–C68, and C70–C84.

Belongs to the neurotoxin 19 (CSTX) family. 04 (U1-Lctx) subfamily. In terms of tissue distribution, expressed by the venom gland.

It is found in the secreted. In Lycosa singoriensis (Wolf spider), this protein is U1-lycotoxin-Ls1h.